The following is a 101-amino-acid chain: Large ribosomal subunit protein uL24 (101 aa).

This sequence belongs to the universal ribosomal protein uL24 family. Part of the 50S ribosomal subunit.

One of two assembly initiator proteins, it binds directly to the 5'-end of the 23S rRNA, where it nucleates assembly of the 50S subunit. Functionally, one of the proteins that surrounds the polypeptide exit tunnel on the outside of the subunit. This chain is Large ribosomal subunit protein uL24, found in Elusimicrobium minutum (strain Pei191).